The sequence spans 260 residues: Global transcriptional regulator CodY (260 aa).

The segment at methionine 1 to leucine 159 is GAF domain. The H-T-H motif DNA-binding region spans alanine 207–arginine 226.

The protein belongs to the CodY family.

The protein resides in the cytoplasm. Functionally, DNA-binding global transcriptional regulator which is involved in the adaptive response to starvation and acts by directly or indirectly controlling the expression of numerous genes in response to nutrient availability. During rapid exponential growth, CodY is highly active and represses genes whose products allow adaptation to nutrient depletion. The polypeptide is Global transcriptional regulator CodY (Streptococcus pyogenes serotype M4 (strain MGAS10750)).